Here is a 303-residue protein sequence, read N- to C-terminus: Holdfast attachment protein D (303 aa).

The span at 266–281 shows a compositional bias: polar residues; that stretch reads SARSTMSGPKSCSTTF. The segment at 266-303 is disordered; it reads SARSTMSGPKSCSTTFRPIRAAASRRPPASAGTRAMTR. Over residues 282–303 the composition is skewed to low complexity; the sequence is RPIRAAASRRPPASAGTRAMTR.

It localises to the cell outer membrane. In terms of biological role, involved in attachment of the holdfast to the cell. The holdfast is a structure that allows the bacteria to firmly adhere to surfaces. This is Holdfast attachment protein D (hfaD) from Caulobacter vibrioides (strain ATCC 19089 / CIP 103742 / CB 15) (Caulobacter crescentus).